The following is a 362-amino-acid chain: Sphingosine 1-phosphate receptor 1 (362 aa).

The Extracellular segment spans residues M1–K25. An N-linked (GlcNAc...) asparagine glycan is attached at N10. The helical transmembrane segment at A26 to L47 threads the bilayer. The Cytoplasmic segment spans residues T48–Y61. Residues F62 to L83 form a helical membrane-spanning segment. At S84–Q95 the chain is on the extracellular side. A helical membrane pass occupies residues W96–I117. R99–E100 is a binding site for sphing-4-enine 1-phosphate. Residues A118 to V139 lie on the Cytoplasmic side of the membrane. The chain crosses the membrane as a helical span at residues F140–W161. The Extracellular segment spans residues N162–P175. The cysteines at positions 163 and 170 are disulfide-linked. N-linked (GlcNAc...) asparagine glycosylation is present at N169. Residues L176–I203 traverse the membrane as a helical segment. Residues Y204–T238 lie on the Cytoplasmic side of the membrane. A helical transmembrane segment spans residues V239–L259. F246–W250 contacts sphing-4-enine 1-phosphate. Over D260–I270 the chain is Extracellular. An intrachain disulfide couples C263 to C268. The helical transmembrane segment at L271–I291 threads the bilayer. The Cytoplasmic portion of the chain corresponds to Y292–S362. C309 is lipidated: S-palmitoyl cysteine. Residues F328–S362 form a disordered region. Basic and acidic residues predominate over residues S329 to P348. A compositionally biased stretch (polar residues) spans I352–S362.

This sequence belongs to the G-protein coupled receptor 1 family.

It localises to the cell membrane. Its function is as follows. G-protein coupled receptor for the bioactive lysosphingolipid sphingosine 1-phosphate (S1P) that seems to be coupled to the G(i) subclass of heteromeric G proteins. Signaling leads to the activation of RAC1, SRC, PTK2/FAK1 and MAP kinases. Plays an important role in cell migration, probably via its role in the reorganization of the actin cytoskeleton and the formation of lamellipodia in response to stimuli that increase the activity of the sphingosine kinase SPHK1. Required for normal chemotaxis toward sphingosine 1-phosphate. The protein is Sphingosine 1-phosphate receptor 1 (s1pr1) of Danio rerio (Zebrafish).